Consider the following 239-residue polypeptide: DNA repair protein RecO (239 aa).

It belongs to the RecO family.

In terms of biological role, involved in DNA repair and RecF pathway recombination. This is DNA repair protein RecO from Cereibacter sphaeroides (strain KD131 / KCTC 12085) (Rhodobacter sphaeroides).